A 93-amino-acid polypeptide reads, in one-letter code: Cobalt transport protein CbiN (93 aa).

The next 2 membrane-spanning stretches (helical) occupy residues Leu-5–Gly-25 and Leu-63–Cys-83.

This sequence belongs to the CbiN family. As to quaternary structure, forms an energy-coupling factor (ECF) transporter complex composed of an ATP-binding protein (A component, CbiO), a transmembrane protein (T component, CbiQ) and 2 possible substrate-capture proteins (S components, CbiM and CbiN) of unknown stoichimetry.

The protein localises to the cell inner membrane. It participates in cofactor biosynthesis; adenosylcobalamin biosynthesis. Functionally, part of the energy-coupling factor (ECF) transporter complex CbiMNOQ involved in cobalt import. In Salmonella arizonae (strain ATCC BAA-731 / CDC346-86 / RSK2980), this protein is Cobalt transport protein CbiN.